Consider the following 277-residue polypeptide: Ubiquitin-conjugating enzyme suppressor 1 (277 aa).

A disordered region spans residues 254-277 (RTLACPDETNDNRGSEHYTKRKKI).

In terms of biological role, not known; its elevated expression suppresses the conditional cell cycle defects associated with UBC3/CDC34 mutations. The protein is Ubiquitin-conjugating enzyme suppressor 1 (UBS1) of Saccharomyces cerevisiae (strain ATCC 204508 / S288c) (Baker's yeast).